The sequence spans 449 residues: tRNA-2-methylthio-N(6)-dimethylallyladenosine synthase (449 aa).

One can recognise an MTTase N-terminal domain in the interval 2–119 (KGLFIRTYGC…LPEMIARASR (118 aa)). [4Fe-4S] cluster is bound by residues C11, C47, C82, C157, C161, and C164. The Radical SAM core domain maps to 143–378 (EADGPAAFVS…QALLREQQTE (236 aa)). The TRAM domain maps to 381 to 443 (ASQIGKTLPV…LNSLTGELVR (63 aa)).

The protein belongs to the methylthiotransferase family. MiaB subfamily. In terms of assembly, monomer. [4Fe-4S] cluster serves as cofactor.

The protein resides in the cytoplasm. The enzyme catalyses N(6)-dimethylallyladenosine(37) in tRNA + (sulfur carrier)-SH + AH2 + 2 S-adenosyl-L-methionine = 2-methylsulfanyl-N(6)-dimethylallyladenosine(37) in tRNA + (sulfur carrier)-H + 5'-deoxyadenosine + L-methionine + A + S-adenosyl-L-homocysteine + 2 H(+). Functionally, catalyzes the methylthiolation of N6-(dimethylallyl)adenosine (i(6)A), leading to the formation of 2-methylthio-N6-(dimethylallyl)adenosine (ms(2)i(6)A) at position 37 in tRNAs that read codons beginning with uridine. This Hyphomonas neptunium (strain ATCC 15444) protein is tRNA-2-methylthio-N(6)-dimethylallyladenosine synthase.